The primary structure comprises 201 residues: 3-isopropylmalate dehydratase small subunit (201 aa).

The protein belongs to the LeuD family. LeuD type 1 subfamily. In terms of assembly, heterodimer of LeuC and LeuD.

It carries out the reaction (2R,3S)-3-isopropylmalate = (2S)-2-isopropylmalate. Its pathway is amino-acid biosynthesis; L-leucine biosynthesis; L-leucine from 3-methyl-2-oxobutanoate: step 2/4. Its function is as follows. Catalyzes the isomerization between 2-isopropylmalate and 3-isopropylmalate, via the formation of 2-isopropylmaleate. The protein is 3-isopropylmalate dehydratase small subunit of Klebsiella pneumoniae (strain 342).